A 432-amino-acid polypeptide reads, in one-letter code: D-amino acid dehydrogenase (432 aa).

Residue 3–17 (VVILGSGVVGVTSAW) participates in FAD binding.

This sequence belongs to the DadA oxidoreductase family. Requires FAD as cofactor.

It catalyses the reaction a D-alpha-amino acid + A + H2O = a 2-oxocarboxylate + AH2 + NH4(+). Its pathway is amino-acid degradation; D-alanine degradation; NH(3) and pyruvate from D-alanine: step 1/1. In terms of biological role, oxidative deamination of D-amino acids. This chain is D-amino acid dehydrogenase, found in Escherichia fergusonii (strain ATCC 35469 / DSM 13698 / CCUG 18766 / IAM 14443 / JCM 21226 / LMG 7866 / NBRC 102419 / NCTC 12128 / CDC 0568-73).